The following is a 153-amino-acid chain: MKHEILLLGKIKDSFIAEGVEEYLKRLQHYTKVELRYLKGKGKKGALLSTEQEGELLLANVPANAFVVALDVQGKNLSSEGLAEQVINWENTGTRSVCYLIGGPLGLSPSLLARADLRLSFSKMTFTHDMVRLLLVEQLYRAYTIKAGEKYHK.

S-adenosyl-L-methionine is bound by residues Leu70, Gly102, and 121–126 (FSKMTF).

It belongs to the RNA methyltransferase RlmH family. In terms of assembly, homodimer.

It localises to the cytoplasm. The enzyme catalyses pseudouridine(1915) in 23S rRNA + S-adenosyl-L-methionine = N(3)-methylpseudouridine(1915) in 23S rRNA + S-adenosyl-L-homocysteine + H(+). In terms of biological role, specifically methylates the pseudouridine at position 1915 (m3Psi1915) in 23S rRNA. The chain is Ribosomal RNA large subunit methyltransferase H from Desulfotalea psychrophila (strain LSv54 / DSM 12343).